We begin with the raw amino-acid sequence, 526 residues long: GMP synthase [glutamine-hydrolyzing] (526 aa).

In terms of domain architecture, Glutamine amidotransferase type-1 spans 3–199; sequence KVAIIDFGSQ…FIKIAGCKTD (197 aa). Cysteine 83 (nucleophile) is an active-site residue. Residues histidine 174 and glutamate 176 contribute to the active site. The 193-residue stretch at 200 to 392 folds into the GMPS ATP-PPase domain; that stretch reads WTMNSFLDEQ…LGISDEILMR (193 aa). 227–233 lines the ATP pocket; that stretch reads SGGVDSS.

In terms of assembly, homodimer.

It catalyses the reaction XMP + L-glutamine + ATP + H2O = GMP + L-glutamate + AMP + diphosphate + 2 H(+). It participates in purine metabolism; GMP biosynthesis; GMP from XMP (L-Gln route): step 1/1. Its function is as follows. Catalyzes the synthesis of GMP from XMP. This Ehrlichia canis (strain Jake) protein is GMP synthase [glutamine-hydrolyzing].